Reading from the N-terminus, the 155-residue chain is MDPVCWICKDDYSIEKNYCNCKNEYKVVHDECMKKWIQYSRERSCKLCNKEYNIISVRKPFSQWVFSIKDCKKSAILYATLFLCTFIISLVLTRINITKIIDTSKNDVSFKLVTMIFYLLPFVITCISFITLIVYLYKYCKISAKNNTYDTIYEL.

Residues M1–I55 form an RING-CH-type zinc finger. Topologically, residues M1–S74 are cytoplasmic. The Zn(2+) site is built by C5, C8, C19, C21, H29, C32, C45, and C48. The helical transmembrane segment at A75–I95 threads the bilayer. At N96–M115 the chain is on the lumenal side. The chain crosses the membrane as a helical span at residues I116–L136. At Y137–L155 the chain is on the cytoplasmic side.

Belongs to the poxviridae LAP protein family.

Its subcellular location is the host membrane. It localises to the host Golgi apparatus. It is found in the host trans-Golgi network membrane. The protein localises to the host early endosome membrane. It carries out the reaction S-ubiquitinyl-[E2 ubiquitin-conjugating enzyme]-L-cysteine + [acceptor protein]-L-lysine = [E2 ubiquitin-conjugating enzyme]-L-cysteine + N(6)-ubiquitinyl-[acceptor protein]-L-lysine.. In terms of biological role, E3 ubiquitin-protein ligase which promotes ubiquitination and subsequent degradation of host MHC-I and CD4 molecules, presumably to prevent lysis of infected cells by cytotoxic T-lymphocytes and NK cell. Binds target molecules through transmembrane interaction. The result of this ubiquitination is the enhancement of the endocytosis of the target chain and the delivery to the lysosome, where it is proteolytically destroyed. The sequence is that of E3 ubiquitin-protein ligase LAP (LAP) from Swinepox virus (strain Kasza) (SWPV).